Reading from the N-terminus, the 407-residue chain is Serpin-Z2 (407 aa).

The segment at Met-1–Lys-28 is disordered. Positions Glu-9–Lys-22 are enriched in polar residues. Residues Gly-344–Ile-368 form an RCL region.

Belongs to the serpin family.

Its function is as follows. Probable serine protease inhibitor. This Arabidopsis thaliana (Mouse-ear cress) protein is Serpin-Z2.